A 57-amino-acid chain; its full sequence is Large ribosomal subunit protein eL20 (57 aa).

Residues 1 to 10 (MSEFTVTGTF) are compositionally biased toward polar residues. The disordered stretch occupies residues 1-21 (MSEFTVTGTFESRDGNQPFEK).

It belongs to the eukaryotic ribosomal protein eL20 family. Part of the 50S ribosomal subunit. Binds 23S rRNA.

In Halomicrobium mukohataei (strain ATCC 700874 / DSM 12286 / JCM 9738 / NCIMB 13541) (Haloarcula mukohataei), this protein is Large ribosomal subunit protein eL20.